The sequence spans 683 residues: Kinesin-like protein KIF2B (683 aa).

T125 is modified (phosphothreonine; by PLK1). The stretch at 141 to 176 (LMTQRKSACLREIEKLQKQRERRRRLHREIRAQRAR) forms a coiled coil. At S204 the chain carries Phosphoserine; by PLK1. Residues 213–543 (RICVCVRKRP…LRYANRVKEI (331 aa)) form the Kinesin motor domain. An ATP-binding site is contributed by 303–310 (GQTGSGKT). Residues 640 to 672 (QLLSILEKKIDILTEIRRKLKLLQADIQKENRH) are a coiled coil.

Belongs to the TRAFAC class myosin-kinesin ATPase superfamily. Kinesin family. MCAK/KIF2 subfamily. Post-translationally, phosphorylation at Thr-125 by PLK1 is required for activity in the correction of kinetochore-microtubules attachment errors, while phosphorylation at Ser-204 also by PLK1 is required for the kinetochore localization and activity in prometaphase.

The protein localises to the cytoplasm. The protein resides in the cytoskeleton. Its subcellular location is the microtubule organizing center. It is found in the centrosome. It localises to the spindle. The protein localises to the chromosome. The protein resides in the centromere. Its subcellular location is the kinetochore. Its function is as follows. Plus end-directed microtubule-dependent motor required for spindle assembly and chromosome movement during mitosis. Has microtubule depolymerization activity. Plays a role in chromosome congression. The sequence is that of Kinesin-like protein KIF2B from Bos taurus (Bovine).